Consider the following 277-residue polypeptide: Small ribosomal subunit protein uS3 (277 aa).

The region spanning 38–106 (IRRLLATGLE…QVQLNILEVK (69 aa)) is the KH type-2 domain. The interval 217-277 (AGVEAGRGAP…SAPSAETTES (61 aa)) is disordered. Positions 225–235 (APDRPRRERPA) are enriched in basic and acidic residues. Residues 242–261 (SGSSGTTATSTEAGRAAAET) show a composition bias toward low complexity.

This sequence belongs to the universal ribosomal protein uS3 family. Part of the 30S ribosomal subunit. Forms a tight complex with proteins S10 and S14.

Its function is as follows. Binds the lower part of the 30S subunit head. Binds mRNA in the 70S ribosome, positioning it for translation. This is Small ribosomal subunit protein uS3 from Mycobacteroides abscessus (strain ATCC 19977 / DSM 44196 / CCUG 20993 / CIP 104536 / JCM 13569 / NCTC 13031 / TMC 1543 / L948) (Mycobacterium abscessus).